The chain runs to 231 residues: Flagellar L-ring protein (231 aa).

The signal sequence occupies residues 1–18; sequence MNRYVSVLALSGIAVLAG. Residue Cys19 is the site of N-palmitoyl cysteine attachment. A lipid anchor (S-diacylglycerol cysteine) is attached at Cys19.

It belongs to the FlgH family. In terms of assembly, the basal body constitutes a major portion of the flagellar organelle and consists of four rings (L,P,S, and M) mounted on a central rod.

It is found in the cell outer membrane. Its subcellular location is the bacterial flagellum basal body. Assembles around the rod to form the L-ring and probably protects the motor/basal body from shearing forces during rotation. This is Flagellar L-ring protein from Pseudomonas fluorescens (strain SBW25).